The following is a 572-amino-acid chain: Proline--tRNA ligase (572 aa).

It belongs to the class-II aminoacyl-tRNA synthetase family. ProS type 1 subfamily. In terms of assembly, homodimer.

Its subcellular location is the cytoplasm. The enzyme catalyses tRNA(Pro) + L-proline + ATP = L-prolyl-tRNA(Pro) + AMP + diphosphate. Its function is as follows. Catalyzes the attachment of proline to tRNA(Pro) in a two-step reaction: proline is first activated by ATP to form Pro-AMP and then transferred to the acceptor end of tRNA(Pro). As ProRS can inadvertently accommodate and process non-cognate amino acids such as alanine and cysteine, to avoid such errors it has two additional distinct editing activities against alanine. One activity is designated as 'pretransfer' editing and involves the tRNA(Pro)-independent hydrolysis of activated Ala-AMP. The other activity is designated 'posttransfer' editing and involves deacylation of mischarged Ala-tRNA(Pro). The misacylated Cys-tRNA(Pro) is not edited by ProRS. The chain is Proline--tRNA ligase from Pectobacterium atrosepticum (strain SCRI 1043 / ATCC BAA-672) (Erwinia carotovora subsp. atroseptica).